Reading from the N-terminus, the 564-residue chain is 3beta-hydroxysteroid-dehydrogenase/decarboxylase isoform 2 (564 aa).

Residue 16–21 (GGRGFA) coordinates NAD(+). 2 N-linked (GlcNAc...) asparagine glycosylation sites follow: N146 and N158. Residues Y161 and K165 each contribute to the NAD(+) site. Catalysis depends on K165, which acts as the Proton donor. The 181-residue stretch at 384–564 (VADTLLWKDL…EKLFGSKKHD (181 aa)) folds into the Reticulon domain. The next 2 membrane-spanning stretches (helical) occupy residues 398 to 418 (IAIF…STVV) and 424 to 444 (ALLV…KIFG). N-linked (GlcNAc...) asparagine glycosylation occurs at N474. 2 consecutive transmembrane segments (helical) span residues 486–506 (GNDW…SLAG) and 507–527 (AISL…AFLV).

It belongs to the 3-beta-HSD family.

Its subcellular location is the endoplasmic reticulum membrane. The enzyme catalyses a 3beta-hydroxysteroid-4alpha-carboxylate + NAD(+) = a 3-oxosteroid + CO2 + NADH. It carries out the reaction 4alpha-carboxy-4beta,14alpha-dimethyl-9beta,19-cyclo-5alpha-ergost-24(24(1))-en-3beta-ol + NAD(+) = cycloeucalenone + CO2 + NADH. The protein operates within steroid biosynthesis; zymosterol biosynthesis; zymosterol from lanosterol: step 4/6. Its function is as follows. 3beta-hydroxysteroid-dehydrogenase/decarboxylase involved in sterol synthesis. Catalyzes the formation of 3-oxosteroids from 3beta-hydroxysteroids-4alpha-carboxylate. Involved in the regulation of inflorescence internodes and leaves growth, probably by affecting auxin transporter activity possibly by altering sterol composition in the membranes. This is 3beta-hydroxysteroid-dehydrogenase/decarboxylase isoform 2 from Arabidopsis thaliana (Mouse-ear cress).